Reading from the N-terminus, the 747-residue chain is Ubiquitin carboxyl-terminal hydrolase 13 (747 aa).

A USP domain is found at 140–668 (FGYENFGNTC…TAYVLFYKAM (529 aa)). C149 serves as the catalytic Nucleophile. Disordered regions lie at residues 172–305 (PKKS…RPPD) and 318–367 (YENP…RKKS). The span at 174-183 (KSRESDQPRK) shows a compositional bias: basic and acidic residues. At S198 the chain carries Phosphoserine. Over residues 225–235 (PVNSVNSNTAG) the composition is skewed to polar residues. Residues 251 to 260 (HVQDNNKKEG) are compositionally biased toward basic and acidic residues. The span at 319 to 343 (ENPSRGSSNSNNLDLKGESNSSLST) shows a compositional bias: polar residues. Residue H619 is the Proton acceptor of the active site.

This sequence belongs to the peptidase C19 family.

The enzyme catalyses Thiol-dependent hydrolysis of ester, thioester, amide, peptide and isopeptide bonds formed by the C-terminal Gly of ubiquitin (a 76-residue protein attached to proteins as an intracellular targeting signal).. The protein is Ubiquitin carboxyl-terminal hydrolase 13 (UBP13) of Saccharomyces cerevisiae (strain ATCC 204508 / S288c) (Baker's yeast).